We begin with the raw amino-acid sequence, 329 residues long: Cysteine synthase (329 aa).

K48 is modified (N6-(pyridoxal phosphate)lysine). Pyridoxal 5'-phosphate-binding positions include N78, 183–187 (GTGGT), and S278.

Belongs to the cysteine synthase/cystathionine beta-synthase family. In terms of assembly, homodimer. Requires pyridoxal 5'-phosphate as cofactor.

The catalysed reaction is O-acetyl-L-serine + hydrogen sulfide = L-cysteine + acetate. The protein operates within amino-acid biosynthesis; L-cysteine biosynthesis; L-cysteine from L-serine: step 2/2. Catalyzes the conversion of O-acetylserine (OAS) to cysteine through the elimination of acetate and addition of hydrogen sulfide. The sequence is that of Cysteine synthase (srpG) from Synechococcus elongatus (strain ATCC 33912 / PCC 7942 / FACHB-805) (Anacystis nidulans R2).